The sequence spans 309 residues: Dicarboxylate carrier UCP2 (309 aa).

The Mitochondrial intermembrane segment spans residues 1–16 (MVGFKATDVPPTATVK). Solcar repeat units lie at residues 11–106 (PTAT…VKQF), 114–203 (AGIG…IKDT), and 212–297 (DDLP…LKRA). Residues 16-63 (KFLGAGTAACIADLITFPLDTAKVRLQIQGERQGPMQAAASAQYRGVL) form an important for interaction with long-chain fatty acids region. The helical transmembrane segment at 17-40 (FLGAGTAACIADLITFPLDTAKVR) threads the bilayer. The Mitochondrial matrix portion of the chain corresponds to 41–77 (LQIQGERQGPMQAAASAQYRGVLGTILTMVRTEGPRS). A helical membrane pass occupies residues 78–103 (LYSGLVAGLQRQMSFASVRIGLYDSV). At 104 to 119 (KQFYTKGSEHAGIGSR) the chain is on the mitochondrial intermembrane side. The chain crosses the membrane as a helical span at residues 120–145 (LLAGSTTGALAVAVAQPTDVVKVRFQ). Topologically, residues 146-173 (AQARAGAGRRYQSTVEAYKTIAREEGFR) are mitochondrial matrix. Residues 174-199 (GLWKGTSPNVARNAIVNCAELVTYDL) form a helical membrane-spanning segment. At 200–217 (IKDTLLKAHLMTDDLPCH) the chain is on the mitochondrial intermembrane side. The helical transmembrane segment at 218 to 242 (FTSAFGAGFCTTVIASPVDVVKTRY) threads the bilayer. At 243–268 (MNSALGQYSSAGHCALTMLQKEGPQA) the chain is on the mitochondrial matrix side. A helical transmembrane segment spans residues 269-294 (FYKGFMPSFLRLGSWNVVMFVTYEQL). The important for interaction with long-chain fatty acids stretch occupies residues 278–285 (LRLGSWNV). Residues 295-309 (KRALMAARASREAPF) lie on the Mitochondrial intermembrane side of the membrane.

This sequence belongs to the mitochondrial carrier (TC 2.A.29) family. Homotetramer. Adopts an asymmetrical dimer of dimers functional form. Interacts with MICU1 (when methylated); leading to decrease the calcium sensitivity of MICU1.

The protein localises to the mitochondrion inner membrane. It catalyses the reaction L-aspartate(out) + phosphate(in) + H(+)(in) = L-aspartate(in) + phosphate(out) + H(+)(out). The enzyme catalyses oxaloacetate(out) + phosphate(in) + H(+)(in) = oxaloacetate(in) + phosphate(out) + H(+)(out). The catalysed reaction is (S)-malate(out) + phosphate(in) + H(+)(in) = (S)-malate(in) + phosphate(out) + H(+)(out). It carries out the reaction malonate(out) + phosphate(in) + H(+)(in) = malonate(in) + phosphate(out) + H(+)(out). It catalyses the reaction sulfate(out) + phosphate(in) + H(+)(in) = sulfate(in) + phosphate(out) + H(+)(out). The enzyme catalyses (S)-malate(out) = (S)-malate(in). The catalysed reaction is L-aspartate(out) = L-aspartate(in). It carries out the reaction phosphate(in) = phosphate(out). It catalyses the reaction chloride(in) = chloride(out). The enzyme catalyses H(+)(in) = H(+)(out). The catalysed reaction is a long-chain fatty acid(out) = a long-chain fatty acid(in). Functionally, antiporter that exports dicarboxylate intermediates of the Krebs cycle in exchange for phosphate plus a proton across the inner membrane of mitochondria, a process driven by mitochondrial motive force with an overall impact on glycolysis, glutaminolysis and glutathione-dependent redox balance. Continuous export of oxaloacetate and related four-carbon dicarboxylates from mitochondrial matrix into the cytosol negatively regulates the oxidation of acetyl-CoA substrates via the Krebs cycle lowering the ATP/ADP ratio and reactive oxygen species (ROS) production. May mediate inducible proton entry into the mitochondrial matrix affecting ATP turnover as a protection mechanism against oxidative stress. The proton currents are most likely associated with fatty acid flipping across the inner membrane of mitochondria in a metabolic process regulated by free fatty acids and purine nucleotides. Regulates the use of glucose as a source of energy. Required for glucose-induced DRP1-dependent mitochondrial fission and neuron activation in the ventromedial nucleus of the hypothalamus (VMH). This mitochondrial adaptation mechanism modulates the VMH pool of glucose-excited neurons with an impact on systemic glucose homeostasis. Regulates ROS levels and metabolic reprogramming of macrophages during the resolution phase of inflammation. Attenuates ROS production in response to IL33 to preserve the integrity of the Krebs cycle required for persistent production of itaconate and subsequent GATA3-dependent differentiation of inflammation-resolving alternatively activated macrophages. Can unidirectionally transport anions including L-malate, L-aspartate, phosphate and chloride ions. Does not mediate adaptive thermogenesis. The polypeptide is Dicarboxylate carrier UCP2 (UCP2) (Bos taurus (Bovine)).